The sequence spans 1919 residues: Protein TIC 214 (1919 aa).

6 helical membrane-spanning segments follow: residues Ile18–Gly38, Phe67–Leu87, Pro90–His110, Leu127–Leu147, Val175–Ile195, and Ile224–Ile244. Disordered regions lie at residues Lys250–Lys375, Ile1107–Ser1129, and Glu1606–Val1636. 5 stretches are compositionally biased toward acidic residues: residues Gly259–Ile269, Gly278–Ile288, Gly297–Ile307, Gly316–Thr328, and Glu355–Glu366. The segment covering Ile1107–Gly1117 has biased composition (basic residues). Over residues Glu1606–Leu1623 the composition is skewed to basic and acidic residues. Residues Asp1626–Val1636 are compositionally biased toward polar residues.

Belongs to the TIC214 family. As to quaternary structure, part of the Tic complex.

It localises to the plastid. It is found in the chloroplast inner membrane. Involved in protein precursor import into chloroplasts. May be part of an intermediate translocation complex acting as a protein-conducting channel at the inner envelope. This chain is Protein TIC 214, found in Panax ginseng (Korean ginseng).